The sequence spans 162 residues: HTH-type transcriptional regulator IscR (162 aa).

The HTH rrf2-type domain maps to 2–131 (RLTSKGRYAV…NNITLGELVN (130 aa)). Residues 28-51 (LADISERQGISLSYLEQLFSRLRK) constitute a DNA-binding region (H-T-H motif). Residues Cys92, Cys98, and Cys104 each contribute to the [2Fe-2S] cluster site. The interval 141–162 (RQHNEAHRPTRAQDAIDVKLRA) is disordered.

[2Fe-2S] cluster is required as a cofactor.

Functionally, regulates the transcription of several operons and genes involved in the biogenesis of Fe-S clusters and Fe-S-containing proteins. The protein is HTH-type transcriptional regulator IscR of Cronobacter sakazakii (strain ATCC BAA-894) (Enterobacter sakazakii).